The chain runs to 450 residues: Tubulin alpha-6 chain (450 aa).

GTP-binding residues include Gln11, Glu71, Gly144, Thr145, Thr179, Asn206, and Asn228. Glu71 is a binding site for Mg(2+). Glu254 is a catalytic residue.

This sequence belongs to the tubulin family. In terms of assembly, dimer of alpha and beta chains. A typical microtubule is a hollow water-filled tube with an outer diameter of 25 nm and an inner diameter of 15 nM. Alpha-beta heterodimers associate head-to-tail to form protofilaments running lengthwise along the microtubule wall with the beta-tubulin subunit facing the microtubule plus end conferring a structural polarity. Microtubules usually have 13 protofilaments but different protofilament numbers can be found in some organisms and specialized cells. Mg(2+) serves as cofactor. In terms of processing, undergoes a tyrosination/detyrosination cycle, the cyclic removal and re-addition of a C-terminal tyrosine residue by the enzymes tubulin tyrosine carboxypeptidase (TTCP) and tubulin tyrosine ligase (TTL), respectively.

It is found in the cytoplasm. The protein localises to the cytoskeleton. The enzyme catalyses GTP + H2O = GDP + phosphate + H(+). Functionally, tubulin is the major constituent of microtubules, a cylinder consisting of laterally associated linear protofilaments composed of alpha- and beta-tubulin heterodimers. Microtubules grow by the addition of GTP-tubulin dimers to the microtubule end, where a stabilizing cap forms. Below the cap, tubulin dimers are in GDP-bound state, owing to GTPase activity of alpha-tubulin. In Zea mays (Maize), this protein is Tubulin alpha-6 chain (TUBA6).